The primary structure comprises 440 residues: Adenylosuccinate synthetase (440 aa).

Residues G14–K20 and G42–T44 each bind GTP. Catalysis depends on D15, which acts as the Proton acceptor. 2 residues coordinate Mg(2+): D15 and G42. IMP-binding positions include D15–K18, N40–H43, T131, R145, Q226, T241, and R313. The Proton donor role is filled by H43. A309–R315 serves as a coordination point for substrate. GTP contacts are provided by residues R315, K341 to D343, and S423 to G425.

It belongs to the adenylosuccinate synthetase family. In terms of assembly, homodimer. Mg(2+) serves as cofactor.

Its subcellular location is the cytoplasm. The catalysed reaction is IMP + L-aspartate + GTP = N(6)-(1,2-dicarboxyethyl)-AMP + GDP + phosphate + 2 H(+). It participates in purine metabolism; AMP biosynthesis via de novo pathway; AMP from IMP: step 1/2. Plays an important role in the de novo pathway of purine nucleotide biosynthesis. Catalyzes the first committed step in the biosynthesis of AMP from IMP. This Hydrogenovibrio crunogenus (strain DSM 25203 / XCL-2) (Thiomicrospira crunogena) protein is Adenylosuccinate synthetase.